A 457-amino-acid polypeptide reads, in one-letter code: Toxin and drug export protein A (457 aa).

The signal sequence occupies residues 1 to 23 (MFTIKKLTLTIVVATTLTGCANI).

It belongs to the outer membrane factor (OMF) (TC 1.B.17) family. Homotrimer. Probably part of a complex composed of LtxB, LtxD and TdeA, which forms a single transport channel across the two membranes.

Its subcellular location is the cell outer membrane. Required for secretion of the LtxA leukotoxin and resistance to various antimicrobial compounds. The protein is Toxin and drug export protein A of Aggregatibacter actinomycetemcomitans (Actinobacillus actinomycetemcomitans).